Reading from the N-terminus, the 1387-residue chain is MTVAATVLPAGEDAPAYRPRSYQVEMFEASLKENIIVTMGTGSGKTHIALLRIIKELESNPHKLIWFLTPTVALCLQQFKFLSDNIPAVRARTLTSLDKVELWTEQPVWDAILKEMQVVVSTHAVLADAMSHGFVKITQLGLMIFDEAHHCMRRHPANKIMQDFYHPALERHGAEAVPKILGLTASPVVRSNRQELLKIESNLDAVCKTPRTHRSELMTHTHRPHLQQILFTPVLLDDLQVGSKTLKALVSAWTSLRLEDDPYIKKLRKSPLDGRALQKVLESGKTYCNDQLKRFATRSLHIFEELGEWAADYFIHASIEQLKARAGNSADTMGWTDEEKAYLLDIVSKLPIPNIDLTHSDPDRIPISSKFRSLLEFLDTKGEPNFSGLIFAKQRATVSVMEKLLSIHPVTKHRFRCASFVGWSGGGSKDVLGELLDARMQRDTLSEFRTGQKNLIIATDVLEEGIDISACSVVVCFDKPPNLKSFVQRRGRARHRQSTYAIMFATDDESSALSKWEDLEQAMIEAYEDDERRLREAWALEAINEEVVERLEVQSTGAVLTADTAVAHLNHFCAVLPRQPYASNEPEFSYEKDDADLLRGTVTLPSCVHPGVRRIQGQRWWQTERAARKEAAFQAYKRLYEFGLLSDHLLPFKRNLELKETDLTNLPALVEVSEQYDPWVDWACSWSSPDVHQTRIAIKHNGDSRMCIRLTSPTSLPPVEPMTLFWDSETIYTLDFDKPKRMKEIAAESIENMRLATALYLQAASSRQMRPEQDFVTLFGPDLTDLELAEWLNKHAGDEPALEVYSRKDFPTVMGIVRDRSRYNEPMLFKRWVVSGQDDTPIVELECDAVPKRRNLLHRQTLAAKQPDSETPAISSKIRLILAENCTIDKLPYAETIFGRFISVILDRLEATLVATRLCETILRDLEFSSIRHIITAITAPSAQSLTNYQRYEFFGDSVLKFTVSCQLFFQHPNWHEGYLSEGRDEIVQNSRLARAALDAGLDAFIMNKMFTPRKWSAPLISEKISLTPKQRTMSTKVLADVVEALIGASYIDGGFAAAHACIHRFLPEVNLENIDRTTAPMPKDGVTNHTLNDDHLMAHIGYTFTNKSLLVESLTHPSCQFDTTTQSYQRLEFLGDAVLDMAIMSTLLSHPREIPQGLMTKIKHAVVNANLLAFFCMEFALTEKRTNVQVTPTGTVTLNPSTEHIELWRFMRYQGAHLQTARDLALSRHSSLRGSIIHGLKHSPSYPWKSLSQLNADKFFSDIIESILGAIFIDSHGNLAECEKFLERLGLLRYLRRILKDEVDVMHPRNIAQQMAKGEIRFEVLRVPNEGGGGGEDDGATYRCTVKMAGVDGVAVVVEGCLTSEEAEITAAERAVEILVGRGCSL.

Residues 26 to 205 (MFEASLKENI…LLKIESNLDA (180 aa)) form the Helicase ATP-binding domain. 39 to 46 (MGTGSGKT) is an ATP binding site. A DEAH box motif is present at residues 146-149 (DEAH). Positions 370-535 (KFRSLLEFLD…AYEDDERRLR (166 aa)) constitute a Helicase C-terminal domain. The region spanning 565–659 (AVAHLNHFCA…LPFKRNLELK (95 aa)) is the Dicer dsRNA-binding fold domain. RNase III domains are found at residues 915 to 1055 (ATRL…IDGG) and 1094 to 1277 (DDHL…IDSH). The Mg(2+) site is built by E1133, D1263, and E1266.

It belongs to the helicase family. Dicer subfamily. Requires Mg(2+) as cofactor. Mn(2+) serves as cofactor.

Dicer-like endonuclease involved in cleaving double-stranded RNA in the RNA interference (RNAi) pathway. Produces 21 to 25 bp dsRNAs (siRNAs) which target the selective destruction of homologous RNAs leading to sequence-specific suppression of gene expression, called post-transcriptional gene silencing (PTGS). Part of a broad host defense response against viral infection and transposons. The polypeptide is Dicer-like protein 2-1 (dcl2-1) (Aspergillus niger (strain ATCC MYA-4892 / CBS 513.88 / FGSC A1513)).